A 406-amino-acid polypeptide reads, in one-letter code: uncharacterized protein (406 aa).

It to S.pombe SpAC12C2.04.

Its subcellular location is the cytoplasm. It is found in the nucleus. This is an uncharacterized protein from Schizosaccharomyces pombe (strain 972 / ATCC 24843) (Fission yeast).